The primary structure comprises 154 residues: uncharacterized protein (154 aa).

The protein localises to the mitochondrion. This is an uncharacterized protein from Marchantia polymorpha (Common liverwort).